The primary structure comprises 329 residues: DNA-directed RNA polymerase subunit alpha (329 aa).

The tract at residues 1–231 (MQTNLLKPKT…EQLAVFAQLE (231 aa)) is alpha N-terminal domain (alpha-NTD). The segment at 249-329 (FDPILLRPVD…SWPPAGLDKR (81 aa)) is alpha C-terminal domain (alpha-CTD).

Belongs to the RNA polymerase alpha chain family. Homodimer. The RNAP catalytic core consists of 2 alpha, 1 beta, 1 beta' and 1 omega subunit. When a sigma factor is associated with the core the holoenzyme is formed, which can initiate transcription.

It carries out the reaction RNA(n) + a ribonucleoside 5'-triphosphate = RNA(n+1) + diphosphate. In terms of biological role, DNA-dependent RNA polymerase catalyzes the transcription of DNA into RNA using the four ribonucleoside triphosphates as substrates. In Polaromonas sp. (strain JS666 / ATCC BAA-500), this protein is DNA-directed RNA polymerase subunit alpha.